We begin with the raw amino-acid sequence, 1131 residues long: MGKFYYSNRRLACYAQATNRHLGGSFEQWLQCMEDSAFRAEVKARVQSEREEVRVRRLFSYPVGSGPAEDPRGVNWAYICLGTTAHWAGVPGDMVPPPEPVKAQEVVVQRSVGEDGRTGYRRQCLNIPNPPPMPKPYSRPIGAFAPTRSGFIRATVKRLTREREESRAAALFAELPLEYPQGAPLVVPRGFAAMRWTYHATWSRWYDTSDERALRTHPGGPALPPLPPPPPIQKPPSFEERLQAALHRQSCARAFALETSLGLNMAWVGMATIPSTSVCCADGRTTGGQTIAQEADPLTHRVSSNTAPGRAQWISERRSALRRREQANSLQGLAAQTDMTFEQARNAYLGAADMIEQGLPLLPPLRNAYAPRGLWRGPSTRANYTLDFRLNGIPTGENTLEILYNPVSDEEMEDYRDRGMSAVVIDALEIAINPFGMPGNPTDLTVVATYGHERNMERAFIGSSSTFLGNGLARAIFFPGLQYSQEEPRRESLIRLYVASTNATVDADSVLAAISVGTLRQHIGSLHSRTVASSVHAAQVQGTTLRATMMGNSVVVSPEGGLVSGVPEANVQIGGGSSMRMVGPLAWENVEEPGQTFSIRSRSRSVRVDRNADVGIAHPRMSTTTRGLAGRGTVPVPKDCQAGKYLKTLDLRDMVSGFSGIQYEKWITAGLVMPDFKVVIRYPANAFTGITWVMSFDAYNRITSSISTTASPAYTLSVPHWLLHHKNGTTSCDIDYGELCGHAMWFSATTFESPKLHFTCLTGNNKELAADWEFVVELYAEFEAAKSFLGKPNFIYSADAFNGSLKFLTIPPLEYDLSATSAYKSVSLLLGQTLVDGTHKVYNFNNTLLSYYLGIGGIVKGKVHVCSPCTYGIVLRVVSEWNGVTNNWNQLFKYPGCYIEEDGSFAIEIRSPYHRTPLRLIDAQSASSFTSTLNFYAISGPIAPSGETAKMPVVVQIEEIALPDLSVPSFPNDYFLWVDFSSFTVDVEEYVIGSRFFDISSTTSTVALGDNPFSHMIACHGLHHGILDLKLMWDLEGEFGKSSGGVTITKLCGDKATGMDGASRVCALQNMGCETELYIGNYAGANPNTALSLYSRWLAIKLDKAKSMKMLRILCKPRGNFEFYGRTCFKV.

The disordered stretch occupies residues 213–236 (ALRTHPGGPALPPLPPPPPIQKPP). Residues 221 to 234 (PALPPLPPPPPIQK) are compositionally biased toward pro residues.

The protein belongs to the nepoviruses RNA2 polyprotein family. Specific enzymatic cleavages in vivo by the P1 encoded 3C-like protease yield mature proteins.

It is found in the host cell junction. Its subcellular location is the host plasmodesma. It localises to the virion. In terms of biological role, implicated in RNA2 replication. Could also be required for nematode transmission of the virus. Its function is as follows. Transports viral genome to neighboring plant cells directly through plasmosdesmata, without any budding. The movement protein allows efficient cell to cell propagation, by bypassing the host cell wall barrier. Acts by forming a tubular structure at the host plasmodesmata, enlarging it enough to allow free passage of virion capsids. In Vitis vinifera (Grape), this protein is RNA2 polyprotein.